The chain runs to 446 residues: ATP synthase subunit b-delta (446 aa).

Residues 1-168 are ATP synthase subunit b; it reads MSTFIGQLVG…PAAADVQYPL (168 aa). Residues 4–24 form a helical membrane-spanning segment; the sequence is FIGQLVGFAAIVFLVVRYVVP. The ATP synthase subunit delta stretch occupies residues 169 to 446; the sequence is MTKMRSSSRV…LAAAEAQLPD (278 aa).

This sequence in the N-terminal section; belongs to the ATPase B chain family. It in the C-terminal section; belongs to the ATPase delta chain family. As to quaternary structure, F-type ATPases have 2 components, F(1) - the catalytic core - and F(0) - the membrane proton channel. F(1) has five subunits: alpha(3), beta(3), gamma(1), delta(1), epsilon(1). F(0) has three main subunits: a(1), b(2) and c(10-14). The alpha and beta chains form an alternating ring which encloses part of the gamma chain. F(1) is attached to F(0) by a central stalk formed by the gamma and epsilon chains, while a peripheral stalk is formed by the delta and b chains.

The protein localises to the cell membrane. Its function is as follows. F(1)F(0) ATP synthase produces ATP from ADP in the presence of a proton or sodium gradient. F-type ATPases consist of two structural domains, F(1) containing the extramembraneous catalytic core and F(0) containing the membrane proton channel, linked together by a central stalk and a peripheral stalk. During catalysis, ATP synthesis in the catalytic domain of F(1) is coupled via a rotary mechanism of the central stalk subunits to proton translocation. In terms of biological role, this fusion protein includes a component of the F(0) channel (subunit b) and of the F(1) subunit (subunit delta). Two copies of subunit b and one of delta together form the peripheral 'stator' stalk which links F(1) to F(0). The sequence is that of ATP synthase subunit b-delta (atpFH) from Mycobacterium avium (strain 104).